Here is a 170-residue protein sequence, read N- to C-terminus: Photosystem II extrinsic protein V (170 aa).

The first 33 residues, 1–33 (MASVFSSLRRSLKGLLVLIPVLIGLAVTSPAQA), serve as a signal peptide directing secretion. Residues Cys70, Cys73, His74, and His125 each contribute to the heme c site.

The protein belongs to the cytochrome c family. PsbV subfamily. As to quaternary structure, PSII is composed of 1 copy each of membrane proteins PsbA, PsbB, PsbC, PsbD, PsbE, PsbF, PsbH, PsbI, PsbJ, PsbK, PsbL, PsbM, PsbT, PsbX, PsbY, PsbZ, Psb30/Ycf12, peripheral proteins PsbO, CyanoQ (PsbQ), PsbU, PsbV and a large number of cofactors. It forms dimeric complexes. Heme c serves as cofactor.

The protein resides in the cellular thylakoid membrane. One of the extrinsic, lumenal subunits of photosystem II (PSII). PSII is a light-driven water plastoquinone oxidoreductase, using light energy to abstract electrons from H(2)O, generating a proton gradient subsequently used for ATP formation. The extrinsic proteins stabilize the structure of photosystem II oxygen-evolving complex (OEC), the ion environment of oxygen evolution and protect the OEC against heat-induced inactivation. Low-potential cytochrome c that plays a role in the OEC of PSII. This Synechococcus sp. (strain CC9605) protein is Photosystem II extrinsic protein V.